Consider the following 496-residue polypeptide: Cobyric acid synthase (496 aa).

In terms of domain architecture, GATase cobBQ-type spans 252–442; the sequence is DLAVAVIRLP…LHGCFDSDTY (191 aa). C333 (nucleophile) is an active-site residue. The active site involves H434.

Belongs to the CobB/CobQ family. CobQ subfamily.

It functions in the pathway cofactor biosynthesis; adenosylcobalamin biosynthesis. Functionally, catalyzes amidations at positions B, D, E, and G on adenosylcobyrinic A,C-diamide. NH(2) groups are provided by glutamine, and one molecule of ATP is hydrogenolyzed for each amidation. The polypeptide is Cobyric acid synthase (Desulforudis audaxviator (strain MP104C)).